We begin with the raw amino-acid sequence, 324 residues long: 2-dehydro-3-deoxygluconokinase (324 aa).

Substrate is bound by residues 35–39 (GAESN), 106–108 (YYR), and Arg-170. ATP-binding positions include 168-170 (NVR), 228-233 (KLGKEG), and 258-261 (GAGD). 2 residues coordinate substrate: Asp-261 and Asp-297. Catalysis depends on Asp-261, which acts as the Proton acceptor.

Belongs to the carbohydrate kinase PfkB family.

The catalysed reaction is 2-dehydro-3-deoxy-D-gluconate + ATP = 2-dehydro-3-deoxy-6-phospho-D-gluconate + ADP + H(+). It functions in the pathway carbohydrate acid metabolism; 2-dehydro-3-deoxy-D-gluconate degradation; D-glyceraldehyde 3-phosphate and pyruvate from 2-dehydro-3-deoxy-D-gluconate: step 1/2. Functionally, catalyzes the phosphorylation of 2-keto-3-deoxygluconate (KDG) to produce 2-keto-3-deoxy-6-phosphogluconate (KDPG). The sequence is that of 2-dehydro-3-deoxygluconokinase (kdgK) from Bacillus subtilis (strain 168).